Consider the following 418-residue polypeptide: Gamma-glutamyl phosphate reductase (418 aa).

Belongs to the gamma-glutamyl phosphate reductase family.

It is found in the cytoplasm. The catalysed reaction is L-glutamate 5-semialdehyde + phosphate + NADP(+) = L-glutamyl 5-phosphate + NADPH + H(+). The protein operates within amino-acid biosynthesis; L-proline biosynthesis; L-glutamate 5-semialdehyde from L-glutamate: step 2/2. Functionally, catalyzes the NADPH-dependent reduction of L-glutamate 5-phosphate into L-glutamate 5-semialdehyde and phosphate. The product spontaneously undergoes cyclization to form 1-pyrroline-5-carboxylate. This chain is Gamma-glutamyl phosphate reductase, found in Citrifermentans bemidjiense (strain ATCC BAA-1014 / DSM 16622 / JCM 12645 / Bem) (Geobacter bemidjiensis).